The chain runs to 137 residues: Large ribosomal subunit protein mL41 (137 aa).

Residues 1–13 (MGVLAAAARCLVR) constitute a mitochondrion transit peptide.

The protein belongs to the mitochondrion-specific ribosomal protein mL41 family. In terms of assembly, component of the mitochondrial large ribosomal subunit (mt-LSU). Mature mammalian 55S mitochondrial ribosomes consist of a small (28S) and a large (39S) subunit. The 28S small subunit contains a 12S ribosomal RNA (12S mt-rRNA) and 30 different proteins. The 39S large subunit contains a 16S rRNA (16S mt-rRNA), a copy of mitochondrial valine transfer RNA (mt-tRNA(Val)), which plays an integral structural role, and 52 different proteins. Interacts with BCL2. Present in kidney, liver, thymus and testis, and at lower level in brain and spleen (at protein level).

It localises to the mitochondrion. Functionally, component of the mitochondrial ribosome large subunit. Also involved in apoptosis and cell cycle. Enhances p53/TP53 stability, thereby contributing to p53/TP53-induced apoptosis in response to growth-inhibitory condition. Enhances p53/TP53 translocation to the mitochondria. Has the ability to arrest the cell cycle at the G1 phase, possibly by stabilizing the CDKN1A and CDKN1B (p27Kip1) proteins. The chain is Large ribosomal subunit protein mL41 (MRPL41) from Homo sapiens (Human).